Consider the following 44-residue polypeptide: DNA-directed RNA polymerase subunit Rpo12 (44 aa).

Zn(2+)-binding residues include Cys-8, Cys-22, and Cys-25.

Belongs to the archaeal Rpo12/eukaryotic RPC10 RNA polymerase subunit family. As to quaternary structure, part of the RNA polymerase complex. The cofactor is Zn(2+).

It is found in the cytoplasm. The catalysed reaction is RNA(n) + a ribonucleoside 5'-triphosphate = RNA(n+1) + diphosphate. In terms of biological role, DNA-dependent RNA polymerase (RNAP) catalyzes the transcription of DNA into RNA using the four ribonucleoside triphosphates as substrates. The chain is DNA-directed RNA polymerase subunit Rpo12 from Halobacterium salinarum (strain ATCC 29341 / DSM 671 / R1).